A 527-amino-acid chain; its full sequence is Bifunctional purine biosynthesis protein PurH (527 aa).

The 149-residue stretch at 1–149 (MASDFLPVRR…KNFARVAVAT (149 aa)) folds into the MGS-like domain.

Belongs to the PurH family.

It catalyses the reaction (6R)-10-formyltetrahydrofolate + 5-amino-1-(5-phospho-beta-D-ribosyl)imidazole-4-carboxamide = 5-formamido-1-(5-phospho-D-ribosyl)imidazole-4-carboxamide + (6S)-5,6,7,8-tetrahydrofolate. The enzyme catalyses IMP + H2O = 5-formamido-1-(5-phospho-D-ribosyl)imidazole-4-carboxamide. The protein operates within purine metabolism; IMP biosynthesis via de novo pathway; 5-formamido-1-(5-phospho-D-ribosyl)imidazole-4-carboxamide from 5-amino-1-(5-phospho-D-ribosyl)imidazole-4-carboxamide (10-formyl THF route): step 1/1. Its pathway is purine metabolism; IMP biosynthesis via de novo pathway; IMP from 5-formamido-1-(5-phospho-D-ribosyl)imidazole-4-carboxamide: step 1/1. The chain is Bifunctional purine biosynthesis protein PurH from Xanthomonas oryzae pv. oryzae (strain PXO99A).